The sequence spans 164 residues: UPF0114 protein YqhA (164 aa).

3 consecutive transmembrane segments (helical) span residues Tyr-10 to Leu-32, Leu-53 to Phe-75, and Leu-136 to Tyr-155.

It belongs to the UPF0114 family.

The protein localises to the cell membrane. In Shigella flexneri, this protein is UPF0114 protein YqhA.